The primary structure comprises 691 residues: Protein vreteno (691 aa).

Residues 128–155 (QKEREITSDPVTSTEPMPTPGPAISATE) form a disordered region. 2 consecutive Tudor domains span residues 366-427 (KLQS…LAGL) and 573-630 (APPI…FIFP).

As to quaternary structure, interacts with aub and piwi. As to expression, gonad-specific.

The protein localises to the cytoplasm. It localises to the cytoplasmic ribonucleoprotein granule. In terms of biological role, gonad-specific protein essential for germline development to repress transposable elements and preventing their mobilization, which is essential for the germline integrity. Acts via the piRNA metabolic process in both germline and somatic gonadal tissues by mediating the repression of transposable elements during meiosis. Required for primary piRNA biogenesis in both germline and somatic gonadal tissues. This chain is Protein vreteno (vret), found in Drosophila melanogaster (Fruit fly).